Reading from the N-terminus, the 765-residue chain is Putative ankyrin repeat protein L371 (765 aa).

ANK repeat units lie at residues 60–89, 93–122, 132–161, 165–194, 198–227, 232–261, 265–295, 322–353, and 357–395; these read NGNY…RLDV, EGNS…KIIG, KGSV…NANY, DNVN…NLNA, QGST…DQNI, LDFY…NPNH, EGNT…RCRS, DGLT…NLNY, and TGNT…GKTV.

This is Putative ankyrin repeat protein L371 from Acanthamoeba polyphaga mimivirus (APMV).